Here is a 92-residue protein sequence, read N- to C-terminus: YcgL domain-containing protein PBPRA1080 (92 aa).

One can recognise a YcgL domain in the interval 1 to 84 (MLCSIYKSSK…PVTNLLHQYK (84 aa)).

The protein is YcgL domain-containing protein PBPRA1080 of Photobacterium profundum (strain SS9).